We begin with the raw amino-acid sequence, 824 residues long: Disintegrin and metalloproteinase domain-containing protein 8 (824 aa).

Residues 1-16 (MRGLGLWLLGAMMLPA) form the signal peptide. Residues 17 to 655 (IAPSRPWALM…EVHAASGSLP (639 aa)) lie on the Extracellular side of the membrane. N-linked (GlcNAc...) asparagine glycosylation is found at Asn-67 and Asn-91. Positions 200 to 400 (RYVELYVVVD…PQSVCLANAP (201 aa)) constitute a Peptidase M12B domain. 12 disulfide bridges follow: Cys-310-Cys-395, Cys-351-Cys-379, Cys-353-Cys-362, Cys-435-Cys-457, Cys-448-Cys-454, Cys-466-Cys-486, Cys-473-Cys-503, Cys-498-Cys-508, Cys-566-Cys-613, Cys-613-Cys-623, Cys-617-Cys-629, and Cys-631-Cys-640. A Zn(2+)-binding site is contributed by His-334. The active site involves Glu-335. Zn(2+)-binding residues include His-338 and His-344. Positions 408–494 (GPVCGNLFVE…ECPEDAFQEN (87 aa)) constitute a Disintegrin domain. A glycan (N-linked (GlcNAc...) asparagine) is linked at Asn-436. Residues 609-641 (RSSNCSAQCHNHGVCNHKQECHCHAGWAPPHCA) enclose the EGF-like domain. An N-linked (GlcNAc...) asparagine glycan is attached at Asn-612. Residues 656-676 (VFVVVVLVLLAVVLVTLAGII) form a helical membrane-spanning segment. At 677–824 (VYRKARSRIL…KQGAGAPTAP (148 aa)) the chain is on the cytoplasmic side. Disordered stretches follow at residues 710 to 756 (VPAK…PVTV) and 776 to 824 (KPTF…PTAP). Pro residues predominate over residues 747-756 (RPPPAPPVTV). The segment covering 788 to 804 (PGAGAANPGPAEGAVGP) has biased composition (low complexity).

As to quaternary structure, interacts with FST3. The cofactor is Zn(2+). As to expression, expressed on neutrophils and monocytes.

The protein resides in the membrane. Functionally, possible involvement in extravasation of leukocytes. In Homo sapiens (Human), this protein is Disintegrin and metalloproteinase domain-containing protein 8 (ADAM8).